We begin with the raw amino-acid sequence, 654 residues long: MERSGPSEVTGSDASGPDPQLAVTMGFTGFGKKARTFDLEAMFEQTRRTAVERSRKTLEAREKEEEMNREKELRRQNEDIEPTSSRSNVVRDCSKSSSRDTSSSESEQSSDSSDDELIGPPLPPKMVGKPVNFMEEDILGPLPPPLNEEEEEAEEEEEEEEEEENPVHKIPDSHEITLKHGTKTVSALGLDPSGARLVTGGYDYDVKFWDFAGMDASFKAFRSLQPCECHQIKSLQYSNTGDMILVVSGSSQAKVIDRDGFEVMECIKGDQYIVDMANTKGHTAMLHTGSWHPKIKGEFMTCSNDATVRTWEVENPKKQKSVFKPRTMQGKKVIPTTCTYSRDGNLIAAACQNGSIQIWDRNLTVHPKFHYKQAHDSGTDTSCVTFSYDGNVLASRGGDDSLKLWDIRQFNKPLFSASGLPTMFPMTDCCFSPDDKLIVTGTSIQRGCGSGKLVFFERRTFQRVYEIDITDASVVRCLWHPKLNQIMVGTGNGLAKVYYDPNKSQRGAKLCVVKTQRKAKQAETLTQDYIITPHALPMFREPRQRSTRKQLEKDRLDPLKSHKPEPPVAGPGRGGRVGTHGGTLSSYIVKNIALDKTDDSNPREAILRHAKAAEDSPYWVSPAYSKTQPKTMFAQVESDDEEAKNEPEWKKRKI.

Disordered stretches follow at residues 1–26 (MERSGPSEVTGSDASGPDPQLAVTMG) and 43–175 (FEQT…DSHE). The segment covering 45-78 (QTRRTAVERSRKTLEAREKEEEMNREKELRRQNE) has biased composition (basic and acidic residues). The segment covering 99-111 (RDTSSSESEQSSD) has biased composition (low complexity). The span at 147–164 (NEEEEEAEEEEEEEEEEE) shows a compositional bias: acidic residues. Over residues 165-175 (NPVHKIPDSHE) the composition is skewed to basic and acidic residues. WD repeat units follow at residues 180–219 (HGTKTVSALGLDPSGARLVTGGYDYDVKFWDFAGMDASFK), 227–268 (CECH…ECIK), 281–321 (GHTA…KQKS), 330–369 (GKKVIPTTCTYSRDGNLIAAACQNGSIQIWDRNLTVHPKF), 376–415 (DSGTDTSCVTFSYDGNVLASRGGDDSLKLWDIRQFNKPLF), 421–466 (PTMF…RVYE), and 469–508 (ITDASVVRCLWHPKLNQIMVGTGNGLAKVYYDPNKSQRGA). Residue Lys296 forms a Glycyl lysine isopeptide (Lys-Gly) (interchain with G-Cter in SUMO2) linkage. Lys452 bears the N6-acetyllysine mark. Residues 540 to 565 (REPRQRSTRKQLEKDRLDPLKSHKPE) are compositionally biased toward basic and acidic residues. Residues 540–579 (REPRQRSTRKQLEKDRLDPLKSHKPEPPVAGPGRGGRVGT) are disordered. Position 579 is a phosphothreonine (Thr579). Glycyl lysine isopeptide (Lys-Gly) (interchain with G-Cter in SUMO2) cross-links involve residues Lys590 and Lys596. Phosphoserine is present on residues Ser621 and Ser638. The disordered stretch occupies residues 630-654 (KTMFAQVESDDEEAKNEPEWKKRKI). Basic and acidic residues predominate over residues 644–654 (KNEPEWKKRKI).

It belongs to the WD repeat GAD-1 family.

This is WD repeat-containing protein 70 (WDR70) from Homo sapiens (Human).